Reading from the N-terminus, the 487-residue chain is MQSTKKAIEITESSLAAATTGYDAVDDLLHYHERGNGIQINGKDSFSNEQAGLFITRENQTWNGYKVFGQPVKLTFSFPDYKFSSTNVAGDTGLSKFSAEQQQQAKLSLQSWADVANITFTEVAAGQKANITFGNYSQDRPGHYDYGTQAYAFLPNTIWQGQDLGGQTWYNVNQSNVKHPATEDYGRQTFTHEIGHALGLSHPGDYNAGEGNPTYNDVTYAEDTRQFSLMSYWSETNTGGDNGGHYAAAPLLDDIAAIQHLYGANPSTRTGDTVYGFNSNTGRDFLSTTSNSQKVIFAAWDAGGNDTFDFSGYTANQRINLNEKSFSDVGGLKGNVSIAAGVTIENAIGGSGNDVIVGNAANNVLKGGAGNDVLFGGGGADELWGGAGKDIFVFSAASDSAPGASDWIRDFQKGIDKIDLSFFNKEANSSDFIHFVDHFSGTAGEALLSYNASSNVTDLSVNIGGHQAPDFLVKIVGQVDVATDFIV.

Residues 1-16 (MQSTKKAIEITESSLA) constitute a propeptide that is removed on maturation. His192 contributes to the Zn(2+) binding site. The active site involves Glu193. 3 residues coordinate Zn(2+): His196, His202, and Tyr232. Ca(2+) contacts are provided by Arg269, Gly271, Thr273, Asp301, Gly303, Gly304, Asp306, Thr343, Glu345, Gly350, Gly352, Asp354, Asn359, Ala361, Asn363, Gly367, Gly368, Ala369, Gly370, Asp372, Gly376, Gly377, Gly378, Gly379, Asp381, Gly385, Gly386, Ala387, Gly388, Asp390, Asp399, Asp406, and Asp416. Hemolysin-type calcium-binding repeat units follow at residues 348 to 365 (IGGSGNDVIVGNAANNVL) and 366 to 383 (KGGAGNDVLFGGGGADEL).

Belongs to the peptidase M10B family. Requires Ca(2+) as cofactor. The cofactor is Zn(2+).

It localises to the secreted. The enzyme catalyses Preferential cleavage of bonds with hydrophobic residues in P1'.. Its function is as follows. Has insecticidal activity against the locust M.palpalis. When administered orally to locusts at a low dose it causes them to lie on their sides exhibiting sporadic limb movements and muscular twitching, followed by full recovery. When administered at higher doses the same symptoms are observed, followed by death. This Serratia marcescens protein is Serralysin.